Here is a 465-residue protein sequence, read N- to C-terminus: UDP-N-acetylmuramate--L-alanine ligase (465 aa).

118–124 contacts ATP; the sequence is GTHGKTT.

This sequence belongs to the MurCDEF family.

The protein resides in the cytoplasm. It catalyses the reaction UDP-N-acetyl-alpha-D-muramate + L-alanine + ATP = UDP-N-acetyl-alpha-D-muramoyl-L-alanine + ADP + phosphate + H(+). The protein operates within cell wall biogenesis; peptidoglycan biosynthesis. Its function is as follows. Cell wall formation. The chain is UDP-N-acetylmuramate--L-alanine ligase from Ruegeria pomeroyi (strain ATCC 700808 / DSM 15171 / DSS-3) (Silicibacter pomeroyi).